The following is a 187-amino-acid chain: dTTP/UTP pyrophosphatase (187 aa).

Catalysis depends on Asp-72, which acts as the Proton acceptor.

It belongs to the Maf family. YhdE subfamily. It depends on a divalent metal cation as a cofactor.

It localises to the cytoplasm. The catalysed reaction is dTTP + H2O = dTMP + diphosphate + H(+). It carries out the reaction UTP + H2O = UMP + diphosphate + H(+). Nucleoside triphosphate pyrophosphatase that hydrolyzes dTTP and UTP. May have a dual role in cell division arrest and in preventing the incorporation of modified nucleotides into cellular nucleic acids. The chain is dTTP/UTP pyrophosphatase from Vibrio cholerae serotype O1 (strain ATCC 39315 / El Tor Inaba N16961).